Consider the following 96-residue polypeptide: Protein transport protein Sec61 subunit beta (96 aa).

Positions 1 to 17 (MPGPTPSGTNVGSSGRS) are enriched in polar residues. The disordered stretch occupies residues 1-54 (MPGPTPSGTNVGSSGRSPSKAVAARAAGSTVRQRKNASCGTRSAGRTTSAGTGG). An N-acetylproline modification is found at Pro2. Residues 2 to 70 (PGPTPSGTNV…EDSPGLKVGP (69 aa)) lie on the Cytoplasmic side of the membrane. Position 7 is a phosphoserine (Ser7). Thr9 carries the phosphothreonine modification. Phosphoserine occurs at positions 13, 14, and 17. Cys39 carries the S-palmitoyl cysteine lipid modification. Over residues 40 to 50 (GTRSAGRTTSA) the composition is skewed to low complexity. A helical membrane pass occupies residues 71–91 (VPVLVMSLLFIAAVFMLHIWG).

This sequence belongs to the SEC61-beta family. In terms of assembly, the SEC61 channel-forming translocon complex consists of channel-forming core components SEC61A1, SEC61B and SEC61G and different auxiliary components such as SEC62 and SEC63. The SEC61 channel associates with the multi-pass translocon (MPT) complex. Interacts with TRAM1.

It localises to the endoplasmic reticulum membrane. Functionally, component of SEC61 channel-forming translocon complex that mediates transport of signal peptide-containing precursor polypeptides across the endoplasmic reticulum (ER). Forms a ribosome receptor and a gated pore in the ER membrane, both functions required for cotranslational translocation of nascent polypeptides. The SEC61 channel is also involved in ER membrane insertion of transmembrane proteins: it mediates membrane insertion of the first few transmembrane segments of proteins, while insertion of subsequent transmembrane regions of multi-pass membrane proteins is mediated by the multi-pass translocon (MPT) complex. The SEC61 channel cooperates with the translocating protein TRAM1 to import nascent proteins into the ER. Required for PKD1/Polycystin-1 biogenesis. In Mus musculus (Mouse), this protein is Protein transport protein Sec61 subunit beta.